The chain runs to 379 residues: MPDPVRIGIVAGEVSGDILAAGLVRELQARYPDAQFEGIAGPRMQALGVKALFEMEELSVMGITEVLGRLPRILKVRRELLRHFIANPPDIFIGVDAPDFNIGVELKLRRAGIKTVHYVSPSVWAWRQNRIHKIKAATDMVLAFLPFEKAFYDRFDAPCRFVGHTMADDIPLVPDQAAVRRTLGIDANRRWLAVLPGSRSAEVGFMSPLFLEACKHLTVRYPDLGFIVPLVNQKRREQFLAIKAELAPDLDMVLLEGQGREAMIAADVVMLASGTAALEAMLVKKPMVVGYKLKPFSYWLAQRLVKTEFVSLPNLLAGRMLVPELIQHECTPENLVVEVSKFFEHDNSALVNTFTELHQLIRCNADQQAAEAVAELLGR.

The protein belongs to the LpxB family.

The catalysed reaction is a lipid X + a UDP-2-N,3-O-bis[(3R)-3-hydroxyacyl]-alpha-D-glucosamine = a lipid A disaccharide + UDP + H(+). Its pathway is bacterial outer membrane biogenesis; LPS lipid A biosynthesis. In terms of biological role, condensation of UDP-2,3-diacylglucosamine and 2,3-diacylglucosamine-1-phosphate to form lipid A disaccharide, a precursor of lipid A, a phosphorylated glycolipid that anchors the lipopolysaccharide to the outer membrane of the cell. The sequence is that of Lipid-A-disaccharide synthase from Aeromonas hydrophila subsp. hydrophila (strain ATCC 7966 / DSM 30187 / BCRC 13018 / CCUG 14551 / JCM 1027 / KCTC 2358 / NCIMB 9240 / NCTC 8049).